The sequence spans 549 residues: Chaperonin GroEL 2 (549 aa).

Residues 29–32 (TLGP), lysine 50, 86–90 (DGTTT), glycine 414, 477–479 (NAA), and aspartate 493 contribute to the ATP site.

Belongs to the chaperonin (HSP60) family. As to quaternary structure, forms a cylinder of 14 subunits composed of two heptameric rings stacked back-to-back. Interacts with the co-chaperonin GroES.

Its subcellular location is the cytoplasm. The enzyme catalyses ATP + H2O + a folded polypeptide = ADP + phosphate + an unfolded polypeptide.. Its function is as follows. Together with its co-chaperonin GroES, plays an essential role in assisting protein folding. The GroEL-GroES system forms a nano-cage that allows encapsulation of the non-native substrate proteins and provides a physical environment optimized to promote and accelerate protein folding. In Myxococcus xanthus (strain DK1622), this protein is Chaperonin GroEL 2.